A 456-amino-acid polypeptide reads, in one-letter code: Bifunctional protein GlmU (456 aa).

The segment at methionine 1–arginine 229 is pyrophosphorylase. Residues leucine 11–glycine 14, lysine 25, glutamine 76, glycine 81–threonine 82, tyrosine 103–aspartate 105, glycine 140, glutamate 154, asparagine 169, and asparagine 227 each bind UDP-N-acetyl-alpha-D-glucosamine. Residue aspartate 105 participates in Mg(2+) binding. Asparagine 227 contacts Mg(2+). Residues leucine 230–alanine 250 form a linker region. The N-acetyltransferase stretch occupies residues glycine 251 to lysine 456. Positions 333 and 351 each coordinate UDP-N-acetyl-alpha-D-glucosamine. The Proton acceptor role is filled by histidine 363. UDP-N-acetyl-alpha-D-glucosamine contacts are provided by tyrosine 366 and asparagine 377. Acetyl-CoA is bound by residues alanine 380, asparagine 386 to tyrosine 387, serine 405, alanine 423, and arginine 440.

This sequence in the N-terminal section; belongs to the N-acetylglucosamine-1-phosphate uridyltransferase family. It in the C-terminal section; belongs to the transferase hexapeptide repeat family. In terms of assembly, homotrimer. The cofactor is Mg(2+).

The protein localises to the cytoplasm. The catalysed reaction is alpha-D-glucosamine 1-phosphate + acetyl-CoA = N-acetyl-alpha-D-glucosamine 1-phosphate + CoA + H(+). It catalyses the reaction N-acetyl-alpha-D-glucosamine 1-phosphate + UTP + H(+) = UDP-N-acetyl-alpha-D-glucosamine + diphosphate. The protein operates within nucleotide-sugar biosynthesis; UDP-N-acetyl-alpha-D-glucosamine biosynthesis; N-acetyl-alpha-D-glucosamine 1-phosphate from alpha-D-glucosamine 6-phosphate (route II): step 2/2. It functions in the pathway nucleotide-sugar biosynthesis; UDP-N-acetyl-alpha-D-glucosamine biosynthesis; UDP-N-acetyl-alpha-D-glucosamine from N-acetyl-alpha-D-glucosamine 1-phosphate: step 1/1. It participates in bacterial outer membrane biogenesis; LPS lipid A biosynthesis. In terms of biological role, catalyzes the last two sequential reactions in the de novo biosynthetic pathway for UDP-N-acetylglucosamine (UDP-GlcNAc). The C-terminal domain catalyzes the transfer of acetyl group from acetyl coenzyme A to glucosamine-1-phosphate (GlcN-1-P) to produce N-acetylglucosamine-1-phosphate (GlcNAc-1-P), which is converted into UDP-GlcNAc by the transfer of uridine 5-monophosphate (from uridine 5-triphosphate), a reaction catalyzed by the N-terminal domain. In Serratia proteamaculans (strain 568), this protein is Bifunctional protein GlmU.